Consider the following 370-residue polypeptide: Glutamate 5-kinase (370 aa).

Residue lysine 13 coordinates ATP. Positions 54, 140, and 152 each coordinate substrate. Residues 172 to 173 (SD) and 214 to 220 (SGGMVTK) contribute to the ATP site. The PUA domain maps to 278–355 (TGTLVLDAGA…GEIEAILGFR (78 aa)).

This sequence belongs to the glutamate 5-kinase family.

The protein resides in the cytoplasm. The enzyme catalyses L-glutamate + ATP = L-glutamyl 5-phosphate + ADP. The protein operates within amino-acid biosynthesis; L-proline biosynthesis; L-glutamate 5-semialdehyde from L-glutamate: step 1/2. Its function is as follows. Catalyzes the transfer of a phosphate group to glutamate to form L-glutamate 5-phosphate. The protein is Glutamate 5-kinase of Paramagnetospirillum magneticum (strain ATCC 700264 / AMB-1) (Magnetospirillum magneticum).